We begin with the raw amino-acid sequence, 292 residues long: Putative two-component response regulator-like APRR4 (292 aa).

Positions 43–158 (RVLVFDEDPS…DLRIVFKHLV (116 aa)) constitute a Response regulatory domain. Residues 168–215 (VTGEAEKAAGEKSSSVGDSTIRNPNKSKRSSCLEAEVNEEDRHDHNDR) are disordered. Residues 179-191 (KSSSVGDSTIRNP) are compositionally biased toward polar residues. Positions 225–275 (RVVWDEELHQNFLNAVDFLGLERAVPKKILDVMKVDYISRENVASHLQVTF) form a DNA-binding region, myb-like GARP.

The protein belongs to the ARR-like family. As to quaternary structure, binds the target DNA as a monomer.

It is found in the nucleus. Transcriptional activator that binds specifically to the DNA sequence 5'-[AG]GATT-3'. The protein is Putative two-component response regulator-like APRR4 (APRR4) of Arabidopsis thaliana (Mouse-ear cress).